A 121-amino-acid chain; its full sequence is Large ribosomal subunit protein bL19 (121 aa).

The protein belongs to the bacterial ribosomal protein bL19 family.

This protein is located at the 30S-50S ribosomal subunit interface and may play a role in the structure and function of the aminoacyl-tRNA binding site. The polypeptide is Large ribosomal subunit protein bL19 (rplS) (Borreliella burgdorferi (strain ATCC 35210 / DSM 4680 / CIP 102532 / B31) (Borrelia burgdorferi)).